Consider the following 142-residue polypeptide: DNA polymerase III subunit chi (142 aa).

Belongs to the DNA polymerase III chi/HolC chain family. DNA polymerase III contains a core (composed of alpha, epsilon and theta chains) that associates with a tau subunit. This core dimerizes to form the POLIII' complex. PolIII' associates with the gamma complex (composed of gamma, delta, delta', psi and chi chains) and with the beta chain to form the complete DNA polymerase III complex. Interacts directly with the psi subunit (holD). The only subunit of the DNA polymerase III holoenzyme known to interact with single-stranded DNA binding protein (SSB).

It carries out the reaction DNA(n) + a 2'-deoxyribonucleoside 5'-triphosphate = DNA(n+1) + diphosphate. Part of the beta sliding clamp loading complex, which hydrolyzes ATP to load the beta clamp onto primed DNA to form the DNA replication pre-initiation complex. DNA polymerase III is a complex, multichain enzyme responsible for most of the replicative synthesis in bacteria. This DNA polymerase also exhibits 3' to 5' exonuclease activity. This Pseudomonas aeruginosa (strain ATCC 15692 / DSM 22644 / CIP 104116 / JCM 14847 / LMG 12228 / 1C / PRS 101 / PAO1) protein is DNA polymerase III subunit chi.